The sequence spans 176 residues: Nucleoside triphosphate/diphosphate phosphatase (176 aa).

Arginine 23 functions as the Proton donor in the catalytic mechanism. Asparagine 87, aspartate 103, aspartate 105, aspartate 107, aspartate 120, and glutamate 123 together coordinate Mg(2+).

It belongs to the Ntdp family. Mg(2+) serves as cofactor.

It carries out the reaction a ribonucleoside 5'-triphosphate + H2O = a ribonucleoside 5'-diphosphate + phosphate + H(+). The enzyme catalyses a ribonucleoside 5'-diphosphate + H2O = a ribonucleoside 5'-phosphate + phosphate + H(+). Functionally, has nucleoside phosphatase activity towards nucleoside triphosphates and nucleoside diphosphates. The chain is Nucleoside triphosphate/diphosphate phosphatase from Bacillus cereus (strain G9842).